A 364-amino-acid polypeptide reads, in one-letter code: Large ribosomal subunit protein uL22m (364 aa).

This sequence belongs to the universal ribosomal protein uL22 family. As to quaternary structure, component of the mitochondrial large ribosomal subunit (mt-LSU). Mature N.crassa 74S mitochondrial ribosomes consist of a small (37S) and a large (54S) subunit. The 37S small subunit contains a 16S ribosomal RNA (16S mt-rRNA) and 32 different proteins. The 54S large subunit contains a 23S rRNA (23S mt-rRNA) and 42 different proteins. uL22m forms the wall of the exit tunnel.

It localises to the mitochondrion. Functionally, component of the mitochondrial ribosome (mitoribosome), a dedicated translation machinery responsible for the synthesis of mitochondrial genome-encoded proteins, including at least some of the essential transmembrane subunits of the mitochondrial respiratory chain. The mitoribosomes are attached to the mitochondrial inner membrane and translation products are cotranslationally integrated into the membrane. This Neurospora crassa (strain ATCC 24698 / 74-OR23-1A / CBS 708.71 / DSM 1257 / FGSC 987) protein is Large ribosomal subunit protein uL22m (mrpl22).